A 493-amino-acid polypeptide reads, in one-letter code: D-glyceraldehyde dehydrogenase (NADP(+)) (493 aa).

NADP(+)-binding positions include 144 to 147 (TPWN), Arg155, 170 to 174 (KPSSD), 202 to 208 (KGSEIGD), 223 to 246 (GSTS…ILEL), Cys279, and 379 to 381 (EIF). Substrate is bound by residues Asn147 and Arg155. Glu245 serves as the catalytic Proton acceptor. Cys279 lines the substrate pocket. Cys279 functions as the Proton donor in the catalytic mechanism.

Belongs to the aldehyde dehydrogenase family. Glyceraldehyde dehydrogenase subfamily. Homotetramer. Dimer of dimers.

It catalyses the reaction D-glyceraldehyde + NADP(+) + H2O = (R)-glycerate + NADPH + 2 H(+). The protein operates within carbohydrate degradation; glycolysis. Its activity is regulated as follows. Stable for 2 hours at 60 degrees Celsius but activity is decreased to less than 50 percent within 15 minutes at 70 degrees Celsius. Functionally, NADP-dependent dehydrogenase of the nED (non-phosphorylated Entner-Doudoroff) pathway with highest activity towards glyceraldehydes (e.g. D,L-glyceraldehyde and D-glyceraldehyde), to a lesser extent towards D,L-glyceraldehyde-3-phosphate and glycolaldehyde, but no activity towards aliphatic or aromatic aldehydes. The chain is D-glyceraldehyde dehydrogenase (NADP(+)) from Picrophilus torridus (strain ATCC 700027 / DSM 9790 / JCM 10055 / NBRC 100828 / KAW 2/3).